A 113-amino-acid chain; its full sequence is Large ribosomal subunit protein eL30 (113 aa).

Belongs to the eukaryotic ribosomal protein eL30 family.

This is Large ribosomal subunit protein eL30 (RpL30) from Spodoptera frugiperda (Fall armyworm).